The primary structure comprises 660 residues: Acetyl-coenzyme A synthetase (660 aa).

CoA-binding positions include 197 to 200 (RGGK) and threonine 317. Residues 397 to 399 (GEP), 421 to 426 (DTFWQT), aspartate 512, and arginine 528 contribute to the ATP site. Residue serine 536 coordinates CoA. Arginine 539 is a binding site for ATP. Mg(2+) contacts are provided by valine 550 and valine 555. Lysine 625 is subject to N6-acetyllysine.

It belongs to the ATP-dependent AMP-binding enzyme family. It depends on Mg(2+) as a cofactor. Acetylated. Deacetylation by the SIR2-homolog deacetylase activates the enzyme.

It carries out the reaction acetate + ATP + CoA = acetyl-CoA + AMP + diphosphate. Functionally, catalyzes the conversion of acetate into acetyl-CoA (AcCoA), an essential intermediate at the junction of anabolic and catabolic pathways. AcsA undergoes a two-step reaction. In the first half reaction, AcsA combines acetate with ATP to form acetyl-adenylate (AcAMP) intermediate. In the second half reaction, it can then transfer the acetyl group from AcAMP to the sulfhydryl group of CoA, forming the product AcCoA. The polypeptide is Acetyl-coenzyme A synthetase (Ralstonia nicotianae (strain ATCC BAA-1114 / GMI1000) (Ralstonia solanacearum)).